A 1196-amino-acid polypeptide reads, in one-letter code: Calcium-activated potassium channel subunit alpha-1 (1196 aa).

At 1–52 (MATWNASQIILNSMSNIIESPQSKPRPVMASNGASLFIPVTMEVPCDQGTRM) the chain is on the extracellular side. Residues 53–73 (WWAFLASSMVTFFGGLFIILV) form a helical membrane-spanning segment. The Cytoplasmic portion of the chain corresponds to 74-146 (WRTFKYLWTV…MISAQTLTGR (73 aa)). A helical membrane pass occupies residues 147 to 167 (VLVVTVFALSIGALMIYFIDS). At 168–182 (SNPIESCQNFYKDFT) the chain is on the extracellular side. Residues 183–203 (LQIDMAFNIFFLLYFGLRFIA) traverse the membrane as a helical segment. Over 204–207 (ANDK) the chain is Cytoplasmic. Residues 208–228 (LWFWLEVNSVVDFFTVPPVFV) form a helical membrane-spanning segment. At 229–232 (SVYL) the chain is on the extracellular side. The chain crosses the membrane as a helical; Voltage-sensor span at residues 233-253 (NRSWLGLRFLRALRLIQFSEI). Topologically, residues 254 to 268 (LQFLNILKTSNSIKL) are cytoplasmic. Residues 269–289 (VNLCSIFISTWLTAAGFIHLV) form a helical membrane-spanning segment. Topologically, residues 290–303 (ENSGDPWRNFENSQ) are extracellular. The segment at residues 304–326 (DLSYWECMYLLMVTMSTVGYGDV) is an intramembrane region (pore-forming). The Selectivity for potassium signature appears at 320 to 323 (TVGY). Topologically, residues 327–335 (YAKTTLGRL) are extracellular. A helical membrane pass occupies residues 336-356 (FMVFFILGGLAMFASYVPEII). The Cytoplasmic segment spans residues 357–1196 (ELIGNRKKYG…PPIREVEDEC (840 aa)). The 143-residue stretch at 375–517 (RKHIVVCGHI…WNWKDGDDAI (143 aa)) folds into the RCK N-terminal 1 domain. Glutamate 407, glutamine 430, and glutamate 432 together coordinate Mg(2+). The tract at residues 524–544 (LGFIAQSCLAQGLSTMLANLF) is segment S7. The tract at residues 581-601 (LSFPAVCELCFVKLKLLMIAI) is segment S8. The tract at residues 645-649 (CKACH) is heme-binding motif. The disordered stretch occupies residues 672 to 697 (SALSPKKKQRNGGMRHSPNTSPNMMR). Residues 748–768 (VLSGHVVVCIFGDMTSALIGV) form a segment S9 region. One can recognise an RCK N-terminal 2 domain in the interval 750–894 (SGHVVVCIFG…MERSSPDNSP (145 aa)). The Calcium bowl signature appears at 914–936 (TELVNDSNVQFLDQDDDDDPDTE). Residues glutamine 923, aspartate 926, aspartate 929, and aspartate 931 each coordinate Ca(2+). The segment at 943-963 (FACGTAFAVSVLDSLMSATYF) is segment S10. Over residues 1098-1119 (ASLSHSSHSSHSSSKKSSSVTS) the composition is skewed to low complexity. Residues 1098–1149 (ASLSHSSHSSHSSSKKSSSVTSILHTASANRQNRVKARDSRDKQKMGQAEKK) form a disordered region. Over residues 1120-1129 (ILHTASANRQ) the composition is skewed to polar residues. A compositionally biased stretch (basic and acidic residues) spans 1133–1149 (KARDSRDKQKMGQAEKK).

It belongs to the potassium channel family. Calcium-activated (TC 1.A.1.3) subfamily. KCa1.1/KCNMA1 sub-subfamily. As to quaternary structure, homotetramer; which constitutes the calcium-activated potassium channel. In terms of tissue distribution, expressed in both the somites and neural tube of 1 day embryos. Within the nervous system, it is restricted to dorsal parts, and expressed centrally in regions dedicated to processing of sensory information. Six hours later, it is expressed segmentally within the somites. At this time, it is expressed in a primary sensory organ, the trigeminal ganglion. By 2 days, it is also expressed in other primary sensory organs, such as the otic vesicle, and the eye. Within the retina, it is expressed to an internal layer. In the developing otic vesicle, it is abundantly expressed near the apical surface. Isoform 3 is neural-specific, and is only expressed during late stages of neuronal differentiation.

The protein resides in the cell membrane. It carries out the reaction K(+)(in) = K(+)(out). Ethanol and carbon monoxide-bound heme increase channel activation. Heme inhibits channel activation. Functionally, potassium channel activated by both membrane depolarization or increase in cytosolic Ca(2+) that mediates export of K(+). It is also activated by the concentration of cytosolic Mg(2+). Its activation dampens the excitatory events that elevate the cytosolic Ca(2+) concentration and/or depolarize the cell membrane. It therefore contributes to repolarization of the membrane potential. Plays a key role in controlling excitability in a number of systems, such as regulation of the contraction of smooth muscle, the tuning of hair cells in the cochlea, regulation of transmitter release, and innate immunity. In smooth muscles, its activation by high level of Ca(2+), caused by ryanodine receptors in the sarcoplasmic reticulum, regulates the membrane potential. In cochlea cells, its number and kinetic properties partly determine the characteristic frequency of each hair cell and thereby helps to establish a tonotopic map. Highly sensitive to both iberiotoxin (IbTx) and charybdotoxin (CTX). This Xenopus laevis (African clawed frog) protein is Calcium-activated potassium channel subunit alpha-1 (kcnma1).